The primary structure comprises 906 residues: Cadherin-2 (906 aa).

The N-terminal stretch at 1-25 is a signal peptide; that stretch reads MCRIAGGPRTLLPLLAALLQASLEA. The propeptide occupies 26-159; it reads SGELALCKTG…HSGALQRQKR (134 aa). At Ser96 the chain carries Phosphoserine. Cadherin domains follow at residues 160–267, 268–382, 383–497, 498–603, and 604–717; these read DWVI…RPEF, LHQV…PPEF, TAMT…NPYF, APNP…DNAP, and QVLP…RIVG. The Extracellular segment spans residues 160–724; the sequence is DWVIPPINLP…IVGAGLGTGT (565 aa). Glu170 is a Ca(2+) binding site. Asn190 carries an N-linked (GlcNAc...) asparagine glycan. The Ca(2+) site is built by Asp226, Glu228, Asp259, Met260, Asn261, Asp262, and Asn263. N-linked (GlcNAc...) asparagine glycosylation is present at Asn273. Ca(2+) contacts are provided by Asp293, Asp295, and Asn301. N-linked (GlcNAc...) asparagine glycosylation is present at Asn325. Asp353 lines the Ca(2+) pocket. Residues Asn402, Asn572, Asn622, Asn651, and Asn692 are each glycosylated (N-linked (GlcNAc...) asparagine). The helical transmembrane segment at 725–745 threads the bilayer; it reads IIAILLCIIILLILVLMFVVW. At 746–906 the chain is on the cytoplasmic side; that stretch reads MKRRDKERQA…LADMYGGGDD (161 aa). Positions 863 to 880 are enriched in low complexity; the sequence is SGSTAGSLSSLNSSSSGG. The segment at 863-883 is disordered; sequence SGSTAGSLSSLNSSSSGGDQD.

As to quaternary structure, homodimer (via extracellular region). Can also form heterodimers with other cadherins (via extracellular region). Dimerization occurs in trans, i.e. with a cadherin chain from another cell. Interacts with PCDH8; this complex may also include TAOK2. The interaction with PCDH8 may lead to internalization through TAOK2/p38 MAPK pathway. Identified in a complex containing FGFR4, NCAM1, CDH2, PLCG1, FRS2, SRC, SHC1, GAP43 and CTTN. May interact with OBSCN (via protein kinase domain 2). Interacts with FBXO45. In terms of processing, cleaved by MMP24. Ectodomain cleavage leads to the generation of a soluble 90 kDa N-terminal soluble fragment and a 45 kDa membrane-bound C-terminal fragment 1 (CTF1), which is further cleaved by gamma-secretase into a 35 kDa. Cleavage in neural stem cells by MMP24 affects CDH2-mediated anchorage of neural stem cells to ependymocytes in the adult subependymal zone, leading to modulate neural stem cell quiescence. May be phosphorylated by OBSCN. In terms of tissue distribution, in testis, expressed in Sertoli and germ cells.

It is found in the cell membrane. The protein localises to the sarcolemma. It localises to the cell junction. Its subcellular location is the cell surface. The protein resides in the desmosome. It is found in the adherens junction. Calcium-dependent cell adhesion protein; preferentially mediates homotypic cell-cell adhesion by dimerization with a CDH2 chain from another cell. Cadherins may thus contribute to the sorting of heterogeneous cell types. Acts as a regulator of neural stem cells quiescence by mediating anchorage of neural stem cells to ependymocytes in the adult subependymal zone: upon cleavage by MMP24, CDH2-mediated anchorage is affected, leading to modulate neural stem cell quiescence. Plays a role in cell-to-cell junction formation between pancreatic beta cells and neural crest stem (NCS) cells, promoting the formation of processes by NCS cells. Required for proper neurite branching. Required for pre- and postsynaptic organization. CDH2 may be involved in neuronal recognition mechanism. In hippocampal neurons, may regulate dendritic spine density. This is Cadherin-2 (Cdh2) from Rattus norvegicus (Rat).